Consider the following 1239-residue polypeptide: DNA-directed RNA polymerase subunit beta (1239 aa).

The disordered stretch occupies residues 1182-1239 (IEGAENQLEDKEEKEEEKEENYKEDSDEYDDLREEDVEPDLEELSLDDLDLDDFGDEH). Composition is skewed to acidic residues over residues 1191 to 1200 (DKEEKEEEKE) and 1206 to 1239 (DSDEYDDLREEDVEPDLEELSLDDLDLDDFGDEH).

It belongs to the RNA polymerase beta chain family. The RNAP catalytic core consists of 2 alpha, 1 beta, 1 beta' and 1 omega subunit. When a sigma factor is associated with the core the holoenzyme is formed, which can initiate transcription.

The enzyme catalyses RNA(n) + a ribonucleoside 5'-triphosphate = RNA(n+1) + diphosphate. Its function is as follows. DNA-dependent RNA polymerase catalyzes the transcription of DNA into RNA using the four ribonucleoside triphosphates as substrates. The polypeptide is DNA-directed RNA polymerase subunit beta (Clostridium botulinum (strain Loch Maree / Type A3)).